Here is a 513-residue protein sequence, read N- to C-terminus: 2-isopropylmalate synthase (513 aa).

Residues 5 to 268 (LIIFDTTLRD…EVGIDTTQIV (264 aa)) enclose the Pyruvate carboxyltransferase domain. Mn(2+) contacts are provided by aspartate 14, histidine 202, histidine 204, and asparagine 239. The segment at 394-513 (RLLSLEQQSA…SKNERVAAQG (120 aa)) is regulatory domain.

It belongs to the alpha-IPM synthase/homocitrate synthase family. LeuA type 1 subfamily. Homodimer. Requires Mn(2+) as cofactor.

The protein resides in the cytoplasm. It catalyses the reaction 3-methyl-2-oxobutanoate + acetyl-CoA + H2O = (2S)-2-isopropylmalate + CoA + H(+). It participates in amino-acid biosynthesis; L-leucine biosynthesis; L-leucine from 3-methyl-2-oxobutanoate: step 1/4. Catalyzes the condensation of the acetyl group of acetyl-CoA with 3-methyl-2-oxobutanoate (2-ketoisovalerate) to form 3-carboxy-3-hydroxy-4-methylpentanoate (2-isopropylmalate). The protein is 2-isopropylmalate synthase of Methylibium petroleiphilum (strain ATCC BAA-1232 / LMG 22953 / PM1).